A 708-amino-acid chain; its full sequence is Elongation factor G (708 aa).

In terms of domain architecture, tr-type G spans 8–290 (KRYRNIGISA…AVIQYLPAPM (283 aa)). Residues 17–24 (AHIDAGKT), 88–92 (DTPGH), and 142–145 (NKMD) contribute to the GTP site.

It belongs to the TRAFAC class translation factor GTPase superfamily. Classic translation factor GTPase family. EF-G/EF-2 subfamily.

It localises to the cytoplasm. In terms of biological role, catalyzes the GTP-dependent ribosomal translocation step during translation elongation. During this step, the ribosome changes from the pre-translocational (PRE) to the post-translocational (POST) state as the newly formed A-site-bound peptidyl-tRNA and P-site-bound deacylated tRNA move to the P and E sites, respectively. Catalyzes the coordinated movement of the two tRNA molecules, the mRNA and conformational changes in the ribosome. The polypeptide is Elongation factor G (Psychrobacter arcticus (strain DSM 17307 / VKM B-2377 / 273-4)).